The chain runs to 246 residues: tRNA pseudouridine synthase A (246 aa).

Residue Asp52 is the Nucleophile of the active site. Tyr111 lines the substrate pocket.

Belongs to the tRNA pseudouridine synthase TruA family. As to quaternary structure, homodimer.

The catalysed reaction is uridine(38/39/40) in tRNA = pseudouridine(38/39/40) in tRNA. Functionally, formation of pseudouridine at positions 38, 39 and 40 in the anticodon stem and loop of transfer RNAs. The chain is tRNA pseudouridine synthase A from Fervidobacterium nodosum (strain ATCC 35602 / DSM 5306 / Rt17-B1).